The primary structure comprises 373 residues: Muscleblind-like protein 2 (373 aa).

4 consecutive C3H1-type zinc fingers follow at residues Trp-13–Lys-41, Asn-47–Thr-73, Thr-176–Asp-204, and Asp-212–Ala-238.

This sequence belongs to the muscleblind family. Interacts with ITGA3. As to expression, expressed in heart, brain, placenta, lung, liver, skeletal muscle, kidney and pancreas.

The protein localises to the nucleus. It is found in the cytoplasm. Mediates pre-mRNA alternative splicing regulation. Acts either as activator or repressor of splicing on specific pre-mRNA targets. Inhibits cardiac troponin-T (TNNT2) pre-mRNA exon inclusion but induces insulin receptor (IR) pre-mRNA exon inclusion in muscle. Antagonizes the alternative splicing activity pattern of CELF proteins. RNA-binding protein that binds to 5'ACACCC-3' core sequence, termed zipcode, within the 3'UTR of ITGA3. Binds to CUG triplet repeat expansion in myotonic dystrophy muscle cells by sequestering the target RNAs. Together with RNA binding proteins RBPMS and RBFOX2, activates vascular smooth muscle cells alternative splicing events. Regulates NCOR2 alternative splicing. Seems to regulate expression and localization of ITGA3 by transporting it from the nucleus to cytoplasm at adhesion plaques. May play a role in myotonic dystrophy pathophysiology (DM). The chain is Muscleblind-like protein 2 (MBNL2) from Homo sapiens (Human).